An 89-amino-acid chain; its full sequence is MVKLRLKRCGRRQRAIYRIVAIDVRSRREGRALRKVGFYDPIKNQTYLNVPVILYFLEKGAQPTGTVHDISKKAGVFMELRLNHQTKFN.

This sequence belongs to the bacterial ribosomal protein bS16 family.

It is found in the plastid. The protein localises to the chloroplast. This is Small ribosomal subunit protein bS16c from Morus indica (Mulberry).